Reading from the N-terminus, the 514-residue chain is MQQLNPSEISEIIKQRIESLDVTAQARNEGTIVSVSDGIVRIYGLADVMYGEMIEFPGGVYGMALNLEQDSVGAVVLGSYLTLAEGMSAKCTGRILEVPVGPELLGRVVDALGNPIDGKGPINAAASDAVEKVAPGVIWRKSVDQPVQTGYKSVDAMIPVGRGQRELIIGDRQIGKTALAVDAIINQKDSGIRCVYVAIGQKQSTIANVVRKLEEAGALANTIVVAASASESAALQFLAPYAGCTMGEYFRDRGEDALIVYDDLSKQAVAYRQISLLLRRPPGREAYPGDVFYLHSRLLERASRVSEEYVEKFTNGAVKGKTGSLTALPIIETQAGDVSAFVPTNVISITDGQIFLESAMFNSGIRPAVNAGISVSRVGGAAQTKIIKKLSGGIRTALAQYRELAAFAQFASDLDEATRKQLEHGQRVTELMKQKQYAPMSIAEMSVSLYAAERGFLQDVEVAKVISFEQALIAFFKRDHADLMAKINEKGDFNDEIDAGLKAGIEKFKATQTW.

Glycine 170–threonine 177 contacts ATP.

The protein belongs to the ATPase alpha/beta chains family. F-type ATPases have 2 components, CF(1) - the catalytic core - and CF(0) - the membrane proton channel. CF(1) has five subunits: alpha(3), beta(3), gamma(1), delta(1), epsilon(1). CF(0) has three main subunits: a(1), b(2) and c(9-12). The alpha and beta chains form an alternating ring which encloses part of the gamma chain. CF(1) is attached to CF(0) by a central stalk formed by the gamma and epsilon chains, while a peripheral stalk is formed by the delta and b chains.

It is found in the cell inner membrane. It catalyses the reaction ATP + H2O + 4 H(+)(in) = ADP + phosphate + 5 H(+)(out). Its function is as follows. Produces ATP from ADP in the presence of a proton gradient across the membrane. The alpha chain is a regulatory subunit. The chain is ATP synthase subunit alpha from Ectopseudomonas mendocina (strain ymp) (Pseudomonas mendocina).